The chain runs to 473 residues: Bifunctional protein GlmU (473 aa).

The tract at residues 1–240 is pyrophosphorylase; the sequence is MAIHPLDVVI…AAQVAGVNSP (240 aa). Residues lysine 25, glutamine 83, 88-89, 110-112, glycine 147, glutamate 165, and asparagine 238 contribute to the UDP-N-acetyl-alpha-D-glucosamine site; these read GT and SGD. Aspartate 112 lines the Mg(2+) pocket. Residue asparagine 238 coordinates Mg(2+). Residues 241–261 are linker; it reads VQLAELERVYQQRLATTLMEQ. Residues 262–473 form an N-acetyltransferase region; sequence GVRLADPARL…WARPVKKPGV (212 aa). Residues arginine 348 and lysine 366 each coordinate UDP-N-acetyl-alpha-D-glucosamine. The Proton acceptor role is filled by histidine 378. UDP-N-acetyl-alpha-D-glucosamine contacts are provided by tyrosine 381 and asparagine 392. Residues alanine 395, 401–402, serine 420, glycine 438, and arginine 455 each bind acetyl-CoA; that span reads NY.

It in the N-terminal section; belongs to the N-acetylglucosamine-1-phosphate uridyltransferase family. This sequence in the C-terminal section; belongs to the transferase hexapeptide repeat family. In terms of assembly, homotrimer. It depends on Mg(2+) as a cofactor.

The protein resides in the cytoplasm. It carries out the reaction alpha-D-glucosamine 1-phosphate + acetyl-CoA = N-acetyl-alpha-D-glucosamine 1-phosphate + CoA + H(+). It catalyses the reaction N-acetyl-alpha-D-glucosamine 1-phosphate + UTP + H(+) = UDP-N-acetyl-alpha-D-glucosamine + diphosphate. Its pathway is nucleotide-sugar biosynthesis; UDP-N-acetyl-alpha-D-glucosamine biosynthesis; N-acetyl-alpha-D-glucosamine 1-phosphate from alpha-D-glucosamine 6-phosphate (route II): step 2/2. The protein operates within nucleotide-sugar biosynthesis; UDP-N-acetyl-alpha-D-glucosamine biosynthesis; UDP-N-acetyl-alpha-D-glucosamine from N-acetyl-alpha-D-glucosamine 1-phosphate: step 1/1. It functions in the pathway bacterial outer membrane biogenesis; LPS lipid A biosynthesis. Functionally, catalyzes the last two sequential reactions in the de novo biosynthetic pathway for UDP-N-acetylglucosamine (UDP-GlcNAc). The C-terminal domain catalyzes the transfer of acetyl group from acetyl coenzyme A to glucosamine-1-phosphate (GlcN-1-P) to produce N-acetylglucosamine-1-phosphate (GlcNAc-1-P), which is converted into UDP-GlcNAc by the transfer of uridine 5-monophosphate (from uridine 5-triphosphate), a reaction catalyzed by the N-terminal domain. This Polaromonas naphthalenivorans (strain CJ2) protein is Bifunctional protein GlmU.